The following is a 298-amino-acid chain: tRNA dimethylallyltransferase (298 aa).

16-23 (GPTASGKS) contacts ATP. Position 18 to 23 (18 to 23 (TASGKS)) interacts with substrate. Interaction with substrate tRNA stretches follow at residues 41-44 (DSMQ) and 165-169 (QRIVR).

It belongs to the IPP transferase family. In terms of assembly, monomer. Mg(2+) is required as a cofactor.

It carries out the reaction adenosine(37) in tRNA + dimethylallyl diphosphate = N(6)-dimethylallyladenosine(37) in tRNA + diphosphate. Functionally, catalyzes the transfer of a dimethylallyl group onto the adenine at position 37 in tRNAs that read codons beginning with uridine, leading to the formation of N6-(dimethylallyl)adenosine (i(6)A). In Rhizobium rhizogenes (strain K84 / ATCC BAA-868) (Agrobacterium radiobacter), this protein is tRNA dimethylallyltransferase.